The chain runs to 51 residues: Insulin (51 aa).

Intrachain disulfides connect C7/C37, C19/C50, and C36/C41.

Belongs to the insulin family. As to quaternary structure, heterodimer of a B chain and an A chain linked by two disulfide bonds.

Its subcellular location is the secreted. In terms of biological role, insulin decreases blood glucose concentration. It increases cell permeability to monosaccharides, amino acids and fatty acids. It accelerates glycolysis, the pentose phosphate cycle, and glycogen synthesis in liver. This Hystrix cristata (North African crested porcupine) protein is Insulin (INS).